Here is a 455-residue protein sequence, read N- to C-terminus: Aminopeptidase YwaD (455 aa).

The signal sequence occupies residues 1 to 31 (MKKLLTVMTMAVLTAGTLLLPAQSVTPAAHA). 5 residues coordinate Zn(2+): histidine 250, aspartate 262, glutamate 295, aspartate 323, and histidine 401.

Belongs to the peptidase M28 family. M28B subfamily. Monomer. The cofactor is Zn(2+).

It is found in the secreted. The enzyme catalyses Release of N-terminal Arg and Lys from oligopeptides when P1' is not Pro. Also acts on arylamides of Arg and Lys.. It catalyses the reaction Release of an N-terminal amino acid, preferentially leucine, but not glutamic or aspartic acids.. Its function is as follows. Catalyzes the hydrolysis of a range of N-terminal amino acids. This chain is Aminopeptidase YwaD (ywaD), found in Bacillus subtilis (strain 168).